The sequence spans 1980 residues: Sodium channel protein type 8 subunit alpha (1980 aa).

2 disordered regions span residues 1 to 20 (MAARLLAPPGPDSFKPFTPE) and 28 to 62 (RIAESKLKKPPKADGSHREDDEDSKPKPNSDLEAG). The Cytoplasmic segment spans residues 1-132 (MAARLLAPPG…RIAIKILIHS (132 aa)). Basic and acidic residues predominate over residues 28-61 (RIAESKLKKPPKADGSHREDDEDSKPKPNSDLEA). An I repeat occupies 114–442 (ILSPFNLIRR…KAMLEQLKKQ (329 aa)). A helical transmembrane segment spans residues 133–151 (VFSMIIMCTILTNCVFMTF). Over 152–158 (SNPPDWS) the chain is Extracellular. A helical membrane pass occupies residues 159 to 179 (KNVEYTFTGIYTFESLVKIIA). At 180–193 (RGFCIDGFTFLRDP) the chain is on the cytoplasmic side. Residues 194–211 (WNWLDFSVIMMAYITEFV) traverse the membrane as a helical segment. At 212 to 217 (NLGNVS) the chain is on the extracellular side. Asn-215 carries N-linked (GlcNAc...) asparagine glycosylation. The chain crosses the membrane as a helical span at residues 218-234 (ALRTFRVLRALKTISVI). Residues 235-253 (PGLKTIVGALIQSVKKLSD) lie on the Cytoplasmic side of the membrane. A helical membrane pass occupies residues 254–273 (VMILTVFCLSVFALIGLQLF). Residues 274 to 355 (MGNLRNKCVV…PNYGYTSFDT (82 aa)) lie on the Extracellular side of the membrane. A disulfide bridge links Cys-281 with Cys-333. N-linked (GlcNAc...) asparagine glycans are attached at residues Asn-289, Asn-295, and Asn-308. An N-linked (GlcNAc...) (high mannose) asparagine glycan is attached at Asn-326. Positions 356–380 (FSWAFLALFRLMTQDYWENLYQLTL) form an intramembrane region, pore-forming. Glu-373 is a binding site for Na(+). Residues 381–387 (RAAGKTY) lie on the Extracellular side of the membrane. The chain crosses the membrane as a helical span at residues 388 to 408 (MIFFVLVIFVGSFYLVNLILA). Residues 409 to 753 (VVAMAYEEQN…EIVNLIVMDP (345 aa)) lie on the Cytoplasmic side of the membrane. Disordered regions lie at residues 446 to 530 (AQAA…KAFR) and 568 to 602 (FRGPGRFRDPGSENEFADDEHSTVEESEGRRDSLF). Positions 474–486 (PRSSSEISKLSSK) are enriched in low complexity. Over residues 489-500 (KERRNRRKKRKQ) the composition is skewed to basic residues. 2 stretches are compositionally biased toward basic and acidic residues: residues 501 to 530 (KELSEGEEKGDPEKVFKSESEDGMRRKAFR) and 586 to 602 (DEHSTVEESEGRRDSLF). Ser-518 and Ser-520 each carry phosphoserine. An II repeat occupies 735 to 1007 (CHPYWIKLKE…QISVIRIKKG (273 aa)). Residues 754-772 (FVDLAITICIVLNTLFMAM) traverse the membrane as a helical segment. The Extracellular portion of the chain corresponds to 773–783 (EHHPMTPQFEH). The helical transmembrane segment at 784 to 803 (VLAVGNLVFTGIFTAEMFLK) threads the bilayer. The Cytoplasmic segment spans residues 804-817 (LIAMDPYYYFQEGW). The helical transmembrane segment at 818–837 (NIFDGFIVSLSLMELSLADV) threads the bilayer. Residues 838–839 (EG) lie on the Extracellular side of the membrane. The chain crosses the membrane as a helical span at residues 840 to 857 (LSVLRSFRLLRVFKLAKS). Topologically, residues 858-873 (WPTLNMLIKIIGNSVG) are cytoplasmic. A helical transmembrane segment spans residues 874 to 892 (ALGNLTLVLAIIVFIFAVV). At 893–921 (GMQLFGKSYKECVCKINQDCELPRWHMHD) the chain is on the extracellular side. Cys-906 and Cys-912 are disulfide-bonded. The segment at residues 922–942 (FFHSFLIVFRVLCGEWIETMW) is an intramembrane region (pore-forming). Residues Glu-936 and Glu-939 each coordinate Na(+). Topologically, residues 943 to 955 (DCMEVAGQAMCLI) are extracellular. A disulfide bridge links Cys-944 with Cys-953. A helical transmembrane segment spans residues 956-976 (VFMMVMVIGNLVVLNLFLALL). The Cytoplasmic segment spans residues 977–1199 (LSSFSADNLA…TCFLIVEHNW (223 aa)). The tract at residues 1107–1148 (NLNTEDVSSESDPEGSKDKLDDTSSSEGSTIDIKPEVEEVPV) is disordered. The III repeat unit spans residues 1180–1495 (LGKSWWILRK…KKYYNAMKKL (316 aa)). The chain crosses the membrane as a helical span at residues 1200-1217 (FETFIIFMILLSSGALAF). Residues 1218–1230 (EDIYIEQRKTIRT) are Extracellular-facing. The chain crosses the membrane as a helical span at residues 1231–1249 (ILEYADKVFTYIFILEMLL). Residues 1250-1263 (KWTAYGFVKFFTNA) are Cytoplasmic-facing. Residues 1264 to 1282 (WCWLDFLIVAVSLVSLIAN) traverse the membrane as a helical segment. At 1283–1290 (ALGYSELG) the chain is on the extracellular side. A helical transmembrane segment spans residues 1291 to 1309 (AIKSLRTLRALRPLRALSR). Residues 1310 to 1326 (FEGMRVVVNALVGAIPS) lie on the Cytoplasmic side of the membrane. Residues 1327 to 1346 (IMNVLLVCLIFWLIFSIMGV) traverse the membrane as a helical segment. Topologically, residues 1347 to 1399 (NLFAGKYHYCFNETSEIRFEIEDVNNKTECEKLMEGNNTEIRWKNVKINFDNV) are extracellular. A disulfide bond links Cys-1356 and Cys-1376. 3 N-linked (GlcNAc...) asparagine glycosylation sites follow: Asn-1358, Asn-1372, and Asn-1383. An intramembrane region (pore-forming) is located at residues 1400-1421 (GAGYLALLQVATFKGWMDIMYA). The Extracellular portion of the chain corresponds to 1422–1438 (AVDSRKPDEQPKYEDNI). Residues 1439-1460 (YMYIYFVIFIIFGSFFTLNLFI) traverse the membrane as a helical segment. The Cytoplasmic segment spans residues 1461 to 1523 (GVIIDNFNQQ…IVFDFVTQQA (63 aa)). The residue at position 1497 (Ser-1497) is a Phosphoserine; by PKC. The IV repeat unit spans residues 1504–1801 (IPRPLNKIQG…WEKFDPDATQ (298 aa)). Residues 1524–1541 (FDIVIMMLICLNMVTMMV) form a helical membrane-spanning segment. The Extracellular segment spans residues 1542 to 1552 (ETDTQSKQMEN). A helical transmembrane segment spans residues 1553–1571 (ILYWINLVFVIFFTCECVL). Over 1572 to 1583 (KMFALRHYYFTI) the chain is Cytoplasmic. Residues 1584-1601 (GWNIFDFVVVILSIVGMF) form a helical membrane-spanning segment. The Extracellular segment spans residues 1602-1614 (LADIIEKYFVSPT). Residues 1615-1631 (LFRVIRLARIGRILRLI) form a helical membrane-spanning segment. At 1632 to 1650 (KGAKGIRTLLFALMMSLPA) the chain is on the cytoplasmic side. The chain crosses the membrane as a helical span at residues 1651-1668 (LFNIGLLLFLVMFIFSIF). At 1669–1690 (GMSNFAYVKHEAGIDDMFNFET) the chain is on the extracellular side. The pore-forming intramembrane region spans 1691 to 1713 (FGNSMICLFQITTSAGWDGLLLP). At 1714–1742 (ILNRPPDCSLDKEHPGSGFKGDCGNPSVG) the chain is on the extracellular side. Cysteines 1721 and 1736 form a disulfide. The helical transmembrane segment at 1743–1765 (IFFFVSYIIISFLIVVNMYIAII) threads the bilayer. The Cytoplasmic portion of the chain corresponds to 1766–1980 (LENFSVATEE…RQKEVRESKC (215 aa)). Residues 1895 to 1924 (EEVSAVVLQRAYRGHLARRGFICKKTTSNK) enclose the IQ domain. The segment at 1922–1980 (SNKLENGGTHREKKESTPSTASLPSYDSVTKPEKEKQQRAEEGRRERAKRQKEVRESKC) is disordered. The segment covering 1938–1949 (TPSTASLPSYDS) has biased composition (polar residues). The segment covering 1951 to 1980 (TKPEKEKQQRAEEGRRERAKRQKEVRESKC) has biased composition (basic and acidic residues).

The protein belongs to the sodium channel (TC 1.A.1.10) family. Nav1.6/SCN8A subfamily. In terms of assembly, the voltage-sensitive sodium channel consists of an ion-conducting pore-forming alpha subunit regulated by one or more beta-1 (SCN1B), beta-2 (SCN2B), beta-3 (SCN3B) and/or beta-4 (SCN4B) subunits. Beta-1 (SCN1B) and beta-3 (SCN3B) are non-covalently associated with alpha, while beta-2 (SCN2B) and beta-4 (SCN4B) are covalently linked by disulfide bonds. Interacts with NEDD4 and NEDD4L. Interacts with FGF13. Interacts with FGF14, GBG3, GBB2 and SCN1B. Interacts with TMEM233. Interacts with the conotoxin GVIIJ. Interacts with the spider beta/delta-theraphotoxin-Pre1a. Interacts with CALM1; the interaction modulates the inactivation rate of SCN8A. May be ubiquitinated by NEDD4L; which would promote its endocytosis. In terms of processing, phosphorylation at Ser-1497 by PKC in a highly conserved cytoplasmic loop slows inactivation of the sodium channel and reduces peak sodium currents. In terms of tissue distribution, expressed in the hippocampus with increased expression in epileptic tissue compared to normal adjacent tissue (at protein level). Expressed in non-neuronal tissues, such as monocytes/macrophages.

It is found in the cell membrane. Its subcellular location is the cell projection. The protein resides in the axon. The protein localises to the cytoplasmic vesicle. It localises to the podosome. It carries out the reaction Na(+)(in) = Na(+)(out). Inhibited by tetrodotoxin and, more weakly, by its metabolite 4,9-ah-tetrodotoxin. In terms of biological role, pore-forming subunit of a voltage-gated sodium channel complex assuming opened or closed conformations in response to the voltage difference across membranes and through which sodium ions selectively pass along their electrochemical gradient. Contributes to neuronal excitability by regulating action potential threshold and propagation. More specifically expressed in non-neuronal cells, could play a role in sodium release from intracellular compartments and participate in the control of podosomes formation and macrophages adhesion and movement. The sequence is that of Sodium channel protein type 8 subunit alpha from Homo sapiens (Human).